The sequence spans 322 residues: Lignin-forming anionic peroxidase (322 aa).

The N-terminal stretch at 1–27 is a signal peptide; the sequence is MNTPTQSFRAKAAIFSLLLLSCMQCHA. Glutamine 28 carries the post-translational modification Pyrrolidone carboxylic acid. Cystine bridges form between cysteine 38/cysteine 118, cysteine 71/cysteine 76, cysteine 124/cysteine 318, and cysteine 203/cysteine 229. Histidine 69 acts as the Proton acceptor in catalysis. Ca(2+)-binding residues include aspartate 70, valine 73, glycine 75, aspartate 77, and serine 79. Position 166 (proline 166) interacts with substrate. Residue histidine 196 coordinates heme b. A Ca(2+)-binding site is contributed by threonine 197. The N-linked (GlcNAc...) asparagine glycan is linked to asparagine 213. Ca(2+) is bound by residues aspartate 242, threonine 245, and aspartate 250.

It belongs to the peroxidase family. Classical plant (class III) peroxidase subfamily. Requires Ca(2+) as cofactor. It depends on heme b as a cofactor. As to expression, mesophyll protoplasts and to a much lesser extent, roots and germinating seeds.

It is found in the secreted. The enzyme catalyses 2 a phenolic donor + H2O2 = 2 a phenolic radical donor + 2 H2O. Its function is as follows. Removal of H(2)O(2), oxidation of toxic reductants, biosynthesis and degradation of lignin, suberization, auxin catabolism, response to environmental stresses such as wounding, pathogen attack and oxidative stress. These functions might be dependent on each isozyme/isoform in each plant tissue. Plays an integral role in secondary cell wall biosynthesis by the polymerization of cinnamyl alcohols into lignin and by forming rigid cross-links between cellulose, pectin, hydroxy-proline-rich glycoproteins, and lignin. This Nicotiana sylvestris (Wood tobacco) protein is Lignin-forming anionic peroxidase.